The following is a 398-amino-acid chain: Phosphoglycerate kinase (398 aa).

Substrate contacts are provided by residues Asp21–Asn23, Arg36, His59–Arg62, Arg119, and Arg157. Residues Lys208, Gly296, Glu327, and Gly354–Ser357 each bind ATP.

This sequence belongs to the phosphoglycerate kinase family. Monomer.

The protein localises to the cytoplasm. It carries out the reaction (2R)-3-phosphoglycerate + ATP = (2R)-3-phospho-glyceroyl phosphate + ADP. It functions in the pathway carbohydrate degradation; glycolysis; pyruvate from D-glyceraldehyde 3-phosphate: step 2/5. The chain is Phosphoglycerate kinase (pgk) from Lactococcus lactis subsp. lactis (strain IL1403) (Streptococcus lactis).